A 122-amino-acid chain; its full sequence is MIQMQSTLEVACNSGARRVQCIKVLGGSHRRYAGIGDVIKVSVKEAIPRGKAKKGDVYNAVVVRTKKGVRRPDGSVIRFDRNAAVLLNANLAPIGTRIFGPVTRELRTERFMKIVSLAPEVL.

The protein belongs to the universal ribosomal protein uL14 family. In terms of assembly, part of the 50S ribosomal subunit. Forms a cluster with proteins L3 and L19. In the 70S ribosome, L14 and L19 interact and together make contacts with the 16S rRNA in bridges B5 and B8.

Functionally, binds to 23S rRNA. Forms part of two intersubunit bridges in the 70S ribosome. The polypeptide is Large ribosomal subunit protein uL14 (Shewanella halifaxensis (strain HAW-EB4)).